The following is an 862-amino-acid chain: Leucine--tRNA ligase (862 aa).

Residues 42-52 (PYPSGRLHMGH) carry the 'HIGH' region motif. Positions 622–626 (KMSKS) match the 'KMSKS' region motif. Residue Lys-625 participates in ATP binding.

The protein belongs to the class-I aminoacyl-tRNA synthetase family.

Its subcellular location is the cytoplasm. The catalysed reaction is tRNA(Leu) + L-leucine + ATP = L-leucyl-tRNA(Leu) + AMP + diphosphate. In Vibrio campbellii (strain ATCC BAA-1116), this protein is Leucine--tRNA ligase.